The following is a 470-amino-acid chain: DNA primase large subunit (470 aa).

[4Fe-4S] cluster is bound by residues Cys279, Cys358, Cys376, and Cys414. Residues 449–470 (EEKKSAKQSNNKENENQSIDEK) are disordered.

It belongs to the eukaryotic-type primase large subunit family. In terms of assembly, heterodimer of a small subunit and a large subunit. [4Fe-4S] cluster is required as a cofactor.

DNA primase is the polymerase that synthesizes small RNA primers for the Okazaki fragments made during discontinuous DNA replication. The protein is DNA primase large subunit (prim2) of Dictyostelium discoideum (Social amoeba).